The chain runs to 87 residues: HssA/B-like protein 28 (87 aa).

The protein belongs to the hssA/B family.

The sequence is that of HssA/B-like protein 28 (hssl28) from Dictyostelium discoideum (Social amoeba).